A 516-amino-acid polypeptide reads, in one-letter code: Delta(24)-sterol reductase (516 aa).

Positions 1–22 (MEPAVSLAVCALLFLLWVRLKG) are cleaved as a signal peptide. Residues 23-31 (LEFVLIHQR) lie on the Lumenal side of the membrane. A helical membrane pass occupies residues 32–52 (WVFVCLFLLPLSLIFDIYYYV). Residues 53 to 516 (RAWVVFKLSS…YDKICKAARH (464 aa)) lie on the Cytoplasmic side of the membrane. An FAD-binding PCMH-type domain is found at 58–234 (FKLSSAPRLH…VAAEIRIIPA (177 aa)). Residue 163 to 175 (TVGGLIMGTGIES) coordinates FAD.

It belongs to the FAD-binding oxidoreductase/transferase type 4 family. Interacts with DHCR7; this interaction regulates DHCR7 activity. FAD is required as a cofactor. As to expression, highly expressed in brain and adrenal gland with moderate expression in liver, lung, spleen, prostate and spinal cord. Low expression in heart, uterus and prostate. Undetectable in blood cells. In the brain, strongly expressed in cortical regions, substantia nigra, caudate nucleus, hippocampus, medulla oblongata and pons. In brains affected by Alzheimer disease, expression in the inferior temporal lobe is substantially lower than in the frontal cortex.

Its subcellular location is the endoplasmic reticulum membrane. The protein resides in the golgi apparatus membrane. The enzyme catalyses cholesterol + NADP(+) = desmosterol + NADPH + H(+). The catalysed reaction is lanosterol + NADPH + H(+) = 24,25-dihydrolanosterol + NADP(+). It catalyses the reaction 5alpha-cholest-8-en-3beta-ol + NADP(+) = zymosterol + NADPH + H(+). The protein operates within steroid biosynthesis; cholesterol biosynthesis. Functionally, catalyzes the reduction of the delta-24 double bond of sterol intermediates during cholesterol biosynthesis. In addition to its cholesterol-synthesizing activity, can protect cells from oxidative stress by reducing caspase 3 activity during apoptosis induced by oxidative stress. Also protects against amyloid-beta peptide-induced apoptosis. The polypeptide is Delta(24)-sterol reductase (DHCR24) (Homo sapiens (Human)).